A 501-amino-acid polypeptide reads, in one-letter code: Solute carrier family 2, facilitated glucose transporter member 5 (501 aa).

The residue at position 1 (methionine 1) is an N-acetylmethionine. Residues methionine 1–alanine 17 are Cytoplasmic-facing. Residues leucine 18–valine 38 traverse the membrane as a helical segment. Residue tyrosine 31 participates in D-fructose binding. The Extracellular segment spans residues asparagine 39–threonine 67. N-linked (GlcNAc...) asparagine glycosylation occurs at asparagine 50. A helical transmembrane segment spans residues leucine 68–threonine 90. The Cytoplasmic segment spans residues leucine 91 to arginine 97. The helical transmembrane segment at lysine 98 to serine 118 threads the bilayer. The Extracellular portion of the chain corresponds to glutamine 119–glutamate 125. A helical membrane pass occupies residues leucine 126–tyrosine 148. The Cytoplasmic portion of the chain corresponds to leucine 149–alanine 160. The chain crosses the membrane as a helical span at residues leucine 161 to leucine 181. Glutamine 166 contacts D-fructose. Topologically, residues arginine 182–tryptophan 191 are extracellular. The chain crosses the membrane as a helical span at residues proline 192–phenylalanine 212. The Cytoplasmic portion of the chain corresponds to proline 213–glutamine 276. The helical transmembrane segment at leucine 277–tyrosine 297 threads the bilayer. Residues glutamine 287 and isoleucine 295–tyrosine 297 each bind D-fructose. The Extracellular segment spans residues tyrosine 298 to aspartate 312. Residues valine 313–phenylalanine 333 form a helical membrane-spanning segment. Residues valine 334 to arginine 341 are Cytoplasmic-facing. A helical membrane pass occupies residues phenylalanine 342 to leucine 362. The Extracellular segment spans residues alanine 363–tryptophan 370. Residues methionine 371–isoleucine 393 form a helical membrane-spanning segment. Histidine 386 lines the D-fructose pocket. The Cytoplasmic segment spans residues proline 394–tyrosine 411. A helical membrane pass occupies residues methionine 412 to isoleucine 432. Histidine 418–tryptophan 419 lines the D-fructose pocket. Over glutamine 433–proline 438 the chain is Extracellular. A helical membrane pass occupies residues tyrosine 439–valine 459. Over proline 460–glutamine 501 the chain is Cytoplasmic.

This sequence belongs to the major facilitator superfamily. Sugar transporter (TC 2.A.1.1) family. Glucose transporter subfamily. In terms of tissue distribution, detected at the apical membrane of villi in the jejunum. Detected in jejunum mucosa. Detected in epididymis and whole testis (at protein level). Detected in small intestine, kidney and testis. Detected in cochlea, but not in inner or outer cochlear hair cells.

The protein resides in the apical cell membrane. Its subcellular location is the cell membrane. It localises to the sarcolemma. It catalyses the reaction D-fructose(out) = D-fructose(in). Fructose uptake is inhibited by cytochalasin B. Its function is as follows. Functions as a fructose transporter that has only low activity with other monosaccharides. Can mediate the uptake of deoxyglucose, but with low efficiency. Essential for fructose uptake in the small intestine. Plays a role in the regulation of salt uptake and blood pressure in response to dietary fructose. Required for the development of high blood pressure in response to high dietary fructose intake. This chain is Solute carrier family 2, facilitated glucose transporter member 5, found in Mus musculus (Mouse).